Reading from the N-terminus, the 331-residue chain is Meiotic recombination protein W68 (331 aa).

The region spanning 1 to 120 is the Topo IIA-type catalytic domain; that stretch reads MDEFSENIER…LGILAASKGL (120 aa). Tyrosine 81 functions as the O-(5'-phospho-DNA)-tyrosine intermediate in the catalytic mechanism. Residues glutamate 167 and aspartate 221 each contribute to the Mg(2+) site.

Belongs to the TOP6A family. Requires Mg(2+) as cofactor.

The protein localises to the nucleus. The enzyme catalyses ATP-dependent breakage, passage and rejoining of double-stranded DNA.. Its function is as follows. Required for meiotic recombination. Together with mei-P22, mediates DNA cleavage that forms the double-strand breaks (DSB) that initiate meiotic recombination. The chain is Meiotic recombination protein W68 from Drosophila melanogaster (Fruit fly).